A 2883-amino-acid chain; its full sequence is Bifunctional DNA-directed RNA polymerase subunit beta-beta' (2883 aa).

Residues 1–1377 (MPTTLKSGNR…DVTVYGETEE (1377 aa)) form a DNA-directed RNA polymerase subunit beta region. The segment at 1382-2883 (PMPIKEDDRP…IRIKEKTEGA (1502 aa)) is DNA-directed RNA polymerase subunit beta'. Residues Cys-1447, Cys-1449, Cys-1462, and Cys-1465 each contribute to the Zn(2+) site. Mg(2+) is bound by residues Asp-1846, Asp-1848, and Asp-1850. 4 residues coordinate Zn(2+): Cys-2176, Cys-2250, Cys-2257, and Cys-2260.

The protein in the N-terminal section; belongs to the RNA polymerase beta chain family. This sequence in the C-terminal section; belongs to the RNA polymerase beta' chain family. In terms of assembly, the RNAP catalytic core consists of 2 alpha, 1 beta/beta' and 1 omega subunit. When a sigma factor is associated with the core the holoenzyme is formed, which can initiate transcription. The cofactor is Mg(2+). Requires Zn(2+) as cofactor.

It catalyses the reaction RNA(n) + a ribonucleoside 5'-triphosphate = RNA(n+1) + diphosphate. In terms of biological role, DNA-dependent RNA polymerase catalyzes the transcription of DNA into RNA using the four ribonucleoside triphosphates as substrates. The sequence is that of Bifunctional DNA-directed RNA polymerase subunit beta-beta' (rpoBC) from Wolinella succinogenes (strain ATCC 29543 / DSM 1740 / CCUG 13145 / JCM 31913 / LMG 7466 / NCTC 11488 / FDC 602W) (Vibrio succinogenes).